The sequence spans 178 residues: Ribosome maturation factor RimM (178 aa).

A PRC barrel domain is found at 95 to 174; the sequence is EGQHFWFNVI…IVHVKDAKDI (80 aa).

It belongs to the RimM family. As to quaternary structure, binds ribosomal protein uS19.

The protein localises to the cytoplasm. In terms of biological role, an accessory protein needed during the final step in the assembly of 30S ribosomal subunit, possibly for assembly of the head region. Essential for efficient processing of 16S rRNA. May be needed both before and after RbfA during the maturation of 16S rRNA. It has affinity for free ribosomal 30S subunits but not for 70S ribosomes. In Sulfurovum sp. (strain NBC37-1), this protein is Ribosome maturation factor RimM.